The primary structure comprises 525 residues: Cytochrome P450 CYP72A613 (525 aa).

The helical transmembrane segment at 2–22 (VFLFPTGTIIIWVLTILLAVI) threads the bilayer. Cys-473 contacts heme.

This sequence belongs to the cytochrome P450 family. As to expression, mainly expressed in leaves and seed pods and, to a lower extent, in flowers and stems.

Its subcellular location is the membrane. The protein operates within steroid metabolism; cholesterol metabolism. In terms of biological role, involved in the biosynthesis of spiroketal steroid and saponin natural products from cholesterol such as diosgenin and analogs (e.g. furostanol and spirostanol), plant defense compounds used as main precursors for the industrial production of steroid hormones. During the 5,6-spiroketalization of cholesterol, may catalyze the 27-monohydroxylation of furostanol-type steroid to an intermediate product that undergoes a stereospecific formation of the terminal heterocycle to yield diosgenin. The chain is Cytochrome P450 CYP72A613 from Trigonella foenum-graecum (Fenugreek).